A 613-amino-acid chain; its full sequence is Laccase 1 (613 aa).

The signal sequence occupies residues 1 to 20; it reads MSRFARLLLIVALFFTNAWA. Plastocyanin-like domains lie at 29–142 and 171–359; these read ITWK…IRPK and YLVV…MRIP. N74 carries an N-linked (GlcNAc...) asparagine glycan. 4 residues coordinate Cu cation: H78, H80, H122, and H124. N-linked (GlcNAc...) asparagine glycans are attached at residues N256, N279, N444, N468, and N484. The 131-residue stretch at 468–598 folds into the Plastocyanin-like 3 domain; that stretch reads NATRDTENDG…GGMGIAILDG (131 aa). Residues H506, H509, and H511 each coordinate Cu cation. Residue N526 is glycosylated (N-linked (GlcNAc...) asparagine). Cu cation-binding residues include H580, C581, H582, and H586.

It belongs to the multicopper oxidase family. The cofactor is Cu cation.

The protein resides in the cell surface. Its pathway is pigment biosynthesis. In terms of biological role, laccase; part of the Pks1 gene cluster that mediates the biosynthesis of an anthraquinone derivative pigment that contributes to conidial pigmentation that provides protection from UV radiation, heat and cold stress. The polyketide synthase Pks1 produces 1-acetyl-2,4,6,8-tetrahydroxy-9,10-anthraquinone though condensation of acetyl-CoA with malonyl-CoA. The dehydratase EthD and the laccase Mlac1 further convert the anthraquinone derivative into the final conidial pigment. This chain is Laccase 1, found in Metarhizium robertsii (strain ARSEF 23 / ATCC MYA-3075) (Metarhizium anisopliae (strain ARSEF 23)).